Here is a 228-residue protein sequence, read N- to C-terminus: Deoxyribose-phosphate aldolase (228 aa).

Aspartate 96 serves as the catalytic Proton donor/acceptor. Catalysis depends on lysine 157, which acts as the Schiff-base intermediate with acetaldehyde. Residue lysine 185 is the Proton donor/acceptor of the active site.

This sequence belongs to the DeoC/FbaB aldolase family. DeoC type 1 subfamily.

It localises to the cytoplasm. The enzyme catalyses 2-deoxy-D-ribose 5-phosphate = D-glyceraldehyde 3-phosphate + acetaldehyde. Its pathway is carbohydrate degradation; 2-deoxy-D-ribose 1-phosphate degradation; D-glyceraldehyde 3-phosphate and acetaldehyde from 2-deoxy-alpha-D-ribose 1-phosphate: step 2/2. In terms of biological role, catalyzes a reversible aldol reaction between acetaldehyde and D-glyceraldehyde 3-phosphate to generate 2-deoxy-D-ribose 5-phosphate. The sequence is that of Deoxyribose-phosphate aldolase from Cyanothece sp. (strain PCC 7425 / ATCC 29141).